The chain runs to 139 residues: Putative nickel-responsive regulator (139 aa).

Ni(2+) is bound by residues H79, H90, H92, and C98.

It belongs to the transcriptional regulatory CopG/NikR family. Ni(2+) serves as cofactor.

In terms of biological role, transcriptional regulator. This chain is Putative nickel-responsive regulator, found in Geotalea uraniireducens (strain Rf4) (Geobacter uraniireducens).